The chain runs to 195 residues: dTTP/UTP pyrophosphatase (195 aa).

Catalysis depends on Asp70, which acts as the Proton acceptor.

Belongs to the Maf family. YhdE subfamily. A divalent metal cation serves as cofactor.

It is found in the cytoplasm. The catalysed reaction is dTTP + H2O = dTMP + diphosphate + H(+). It catalyses the reaction UTP + H2O = UMP + diphosphate + H(+). Nucleoside triphosphate pyrophosphatase that hydrolyzes dTTP and UTP. May have a dual role in cell division arrest and in preventing the incorporation of modified nucleotides into cellular nucleic acids. The chain is dTTP/UTP pyrophosphatase from Photorhabdus laumondii subsp. laumondii (strain DSM 15139 / CIP 105565 / TT01) (Photorhabdus luminescens subsp. laumondii).